The primary structure comprises 300 residues: Protease HtpX homolog (300 aa).

A run of 2 helical transmembrane segments spans residues 5 to 25 (IFLL…FISL) and 41 to 61 (TLFL…LAIS). Histidine 146 serves as a coordination point for Zn(2+). Glutamate 147 is an active-site residue. Histidine 150 contacts Zn(2+). The next 2 membrane-spanning stretches (helical) occupy residues 161–181 (LLQG…GFFV) and 196–216 (IGFY…ASII). Glutamate 225 provides a ligand contact to Zn(2+).

It belongs to the peptidase M48B family. Zn(2+) is required as a cofactor.

The protein localises to the cell inner membrane. This is Protease HtpX homolog from Methylacidiphilum infernorum (isolate V4) (Methylokorus infernorum (strain V4)).